A 68-amino-acid chain; its full sequence is DNA-directed RNA polymerase subunit omega (68 aa).

The protein belongs to the RNA polymerase subunit omega family. The RNAP catalytic core consists of 2 alpha, 1 beta, 1 beta' and 1 omega subunit. When a sigma factor is associated with the core the holoenzyme is formed, which can initiate transcription.

It catalyses the reaction RNA(n) + a ribonucleoside 5'-triphosphate = RNA(n+1) + diphosphate. In terms of biological role, promotes RNA polymerase assembly. Latches the N- and C-terminal regions of the beta' subunit thereby facilitating its interaction with the beta and alpha subunits. This Brevibacillus brevis (strain 47 / JCM 6285 / NBRC 100599) protein is DNA-directed RNA polymerase subunit omega.